We begin with the raw amino-acid sequence, 363 residues long: Spermidine/putrescine import ATP-binding protein PotA (363 aa).

An ABC transporter domain is found at V6 to I236. G38–T45 serves as a coordination point for ATP.

Belongs to the ABC transporter superfamily. Spermidine/putrescine importer (TC 3.A.1.11.1) family. The complex is composed of two ATP-binding proteins (PotA), two transmembrane proteins (PotB and PotC) and a solute-binding protein (PotD).

It is found in the cell membrane. The enzyme catalyses ATP + H2O + polyamine-[polyamine-binding protein]Side 1 = ADP + phosphate + polyamineSide 2 + [polyamine-binding protein]Side 1.. In terms of biological role, part of the ABC transporter complex PotABCD involved in spermidine/putrescine import. Responsible for energy coupling to the transport system. The chain is Spermidine/putrescine import ATP-binding protein PotA from Latilactobacillus sakei subsp. sakei (strain 23K) (Lactobacillus sakei subsp. sakei).